A 285-amino-acid polypeptide reads, in one-letter code: MTAHIISGTAVAKQVKANIAEQIQAYTAQDKRKPGLAVILVGMDPASQVYVNSKRKSCAEIGIESKSYDLPAETGEAELLAIIEQLNHDDSVDGILVQLPLPKQIDATKVTEAIVPHKDVDGFHPYNVGRLCQKIPTLRSCTPYGVMKLLESTGVNLAGLHAVVVGASNIVGRPMAMELLLAGCTVTVTHSRTKDLAYHVSQADIVVAGVGKPNFVKGEWIKPGAIVIDVGINRVEGKLIGDVEYSAAEAKASFITPVPGGVGPMTVAMLMQNTLQAYQVHLQAV.

Residues 166–168, S191, and I232 each bind NADP(+); that span reads GAS.

Belongs to the tetrahydrofolate dehydrogenase/cyclohydrolase family. In terms of assembly, homodimer.

The enzyme catalyses (6R)-5,10-methylene-5,6,7,8-tetrahydrofolate + NADP(+) = (6R)-5,10-methenyltetrahydrofolate + NADPH. The catalysed reaction is (6R)-5,10-methenyltetrahydrofolate + H2O = (6R)-10-formyltetrahydrofolate + H(+). Its pathway is one-carbon metabolism; tetrahydrofolate interconversion. Functionally, catalyzes the oxidation of 5,10-methylenetetrahydrofolate to 5,10-methenyltetrahydrofolate and then the hydrolysis of 5,10-methenyltetrahydrofolate to 10-formyltetrahydrofolate. The polypeptide is Bifunctional protein FolD (Actinobacillus pleuropneumoniae serotype 7 (strain AP76)).